Consider the following 403-residue polypeptide: G2/mitotic-specific cyclin-B1 (403 aa).

Belongs to the cyclin family. Cyclin AB subfamily. Interacts with the CDC2 protein kinase to form a serine/threonine kinase holoenzyme complex also known as maturation promoting factor (MPF). The cyclin subunit imparts substrate specificity to the complex.

Functionally, essential for the control of the cell cycle at the G2/M (mitosis) transition. This chain is G2/mitotic-specific cyclin-B1 (ccnb1), found in Anguilla japonica (Japanese eel).